A 331-amino-acid polypeptide reads, in one-letter code: MNYLQLPKIDLHCHLDGSVRPQTVIDLAKIQGIDIPSDNVDDIKSLMVAPESCPNLDEYLTRFALPVSVMQTEAALERVSFELFEDAAKENVKYLEVRFGPQLHRKQGLNFEQIIGSVVKGMHRAEALYDIKGNYILSIIKVLPKDDINEVIDAGATFLNKGVVAFDLAASEEPGFCHEYIPYAKYALDKGYRITIHAGEQGVGQNVYDAISLLGAERIGHGIHINNHKDAYELVRAEAVALEACPSSNVQTKAVENIESHPFGDFYRDGLLVTINTDNRTVSDTTMTKELQLAAEKFNLSEQDYFQIYKISVENAFASDEVKQSLLKFIA.

Zn(2+)-binding residues include His12 and His14. 2 residues coordinate substrate: His14 and Asp16. His197 provides a ligand contact to Zn(2+). Glu200 acts as the Proton donor in catalysis. Position 278 (Asp278) interacts with Zn(2+).

This sequence belongs to the metallo-dependent hydrolases superfamily. Adenosine and AMP deaminases family. Adenosine deaminase subfamily. Zn(2+) serves as cofactor.

It catalyses the reaction adenosine + H2O + H(+) = inosine + NH4(+). The catalysed reaction is 2'-deoxyadenosine + H2O + H(+) = 2'-deoxyinosine + NH4(+). In terms of biological role, catalyzes the hydrolytic deamination of adenosine and 2-deoxyadenosine. The polypeptide is Adenosine deaminase (Shewanella halifaxensis (strain HAW-EB4)).